A 154-amino-acid chain; its full sequence is Ribonuclease H (154 aa).

Residues 9-150 form the RNase H type-1 domain; the sequence is SHPHIIIYTD…ADALANKGVE (142 aa). Mg(2+)-binding residues include Asp18, Glu56, Asp78, and Asp142.

The protein belongs to the RNase H family. As to quaternary structure, monomer. Mg(2+) serves as cofactor.

It is found in the cytoplasm. It catalyses the reaction Endonucleolytic cleavage to 5'-phosphomonoester.. Its function is as follows. Endonuclease that specifically degrades the RNA of RNA-DNA hybrids. The chain is Ribonuclease H from Polynucleobacter asymbioticus (strain DSM 18221 / CIP 109841 / QLW-P1DMWA-1) (Polynucleobacter necessarius subsp. asymbioticus).